Reading from the N-terminus, the 329-residue chain is DNA-directed RNA polymerase subunit alpha (329 aa).

The interval 1 to 234 (MQGSVTEFLK…EQLDAFVELR (234 aa)) is alpha N-terminal domain (alpha-NTD). Residues 248 to 329 (FDPILLRPVD…WPPASLADDL (82 aa)) are alpha C-terminal domain (alpha-CTD).

Belongs to the RNA polymerase alpha chain family. Homodimer. The RNAP catalytic core consists of 2 alpha, 1 beta, 1 beta' and 1 omega subunit. When a sigma factor is associated with the core the holoenzyme is formed, which can initiate transcription.

It catalyses the reaction RNA(n) + a ribonucleoside 5'-triphosphate = RNA(n+1) + diphosphate. DNA-dependent RNA polymerase catalyzes the transcription of DNA into RNA using the four ribonucleoside triphosphates as substrates. In Shewanella putrefaciens (strain CN-32 / ATCC BAA-453), this protein is DNA-directed RNA polymerase subunit alpha.